The chain runs to 360 residues: Phenylalanine--tRNA ligase alpha subunit (360 aa).

Mg(2+) is bound at residue E260.

Belongs to the class-II aminoacyl-tRNA synthetase family. Phe-tRNA synthetase alpha subunit type 1 subfamily. Tetramer of two alpha and two beta subunits. The cofactor is Mg(2+).

The protein localises to the cytoplasm. The enzyme catalyses tRNA(Phe) + L-phenylalanine + ATP = L-phenylalanyl-tRNA(Phe) + AMP + diphosphate + H(+). The sequence is that of Phenylalanine--tRNA ligase alpha subunit from Methylobacterium radiotolerans (strain ATCC 27329 / DSM 1819 / JCM 2831 / NBRC 15690 / NCIMB 10815 / 0-1).